A 446-amino-acid polypeptide reads, in one-letter code: Gamma-glutamyl phosphate reductase (446 aa).

This sequence belongs to the gamma-glutamyl phosphate reductase family.

The protein resides in the cytoplasm. It catalyses the reaction L-glutamate 5-semialdehyde + phosphate + NADP(+) = L-glutamyl 5-phosphate + NADPH + H(+). The protein operates within amino-acid biosynthesis; L-proline biosynthesis; L-glutamate 5-semialdehyde from L-glutamate: step 2/2. Its function is as follows. Catalyzes the NADPH-dependent reduction of L-glutamate 5-phosphate into L-glutamate 5-semialdehyde and phosphate. The product spontaneously undergoes cyclization to form 1-pyrroline-5-carboxylate. The chain is Gamma-glutamyl phosphate reductase from Sulfurihydrogenibium sp. (strain YO3AOP1).